Reading from the N-terminus, the 395-residue chain is Probable peptidoglycan glycosyltransferase FtsW (395 aa).

Over 1-24 (MADLAAGVAERGPRLSLWSSLDQR) the chain is Cytoplasmic. Residues 25 to 45 (LVWVVAATALLGLVMVASASI) traverse the membrane as a helical segment. Residues 46–62 (SMAEQATGDPFYFFKRQ) are Periplasmic-facing. A helical membrane pass occupies residues 63-83 (IFFALLGLGMALALLQIPLAT). The Cytoplasmic portion of the chain corresponds to 84–86 (WER). A helical membrane pass occupies residues 87–107 (AGPGLLLGALALLVLVLIPGV). The Periplasmic portion of the chain corresponds to 108–116 (GREVNGAVR). The helical transmembrane segment at 117–137 (WIPLGVFNLQVAEVVKVLLAL) threads the bilayer. At 138-152 (YLAGFLVRRQQQLRT) the chain is on the cytoplasmic side. Residues 153–173 (SMAAFLVPVLVSAACAFLLLL) form a helical membrane-spanning segment. At 174 to 178 (QPDFG) the chain is on the periplasmic side. A helical membrane pass occupies residues 179-199 (TALMLMALAVGLLYLAGAPLW). Arg200 is a topological domain (cytoplasmic). The helical transmembrane segment at 201–221 (FAALVGVLAAAAAALVVYSPY) threads the bilayer. The Periplasmic portion of the chain corresponds to 222 to 276 (RWQRVTAFMDPWSDPFNTGFQLTQSLIAIGRGDWLGVGLGGSVQKLFYLPEAHTD). Residues 277-297 (FVFSVLAEELGWLGVLAVVLL) traverse the membrane as a helical segment. Topologically, residues 298–316 (FSYIVWRAMAVGWQCHRHR) are cytoplasmic. Residues 317–337 (LPFAGYLAWAVGLALGLQAFI) traverse the membrane as a helical segment. Topologically, residues 338–352 (NMGVATGLLPTKGLT) are periplasmic. A helical membrane pass occupies residues 353–373 (LPLFSYGGSSALATGAMVGLL). The Cytoplasmic portion of the chain corresponds to 374–395 (LRCGYELAQARAEGRRPEEAAS).

The protein belongs to the SEDS family. FtsW subfamily.

It localises to the cell inner membrane. The enzyme catalyses [GlcNAc-(1-&gt;4)-Mur2Ac(oyl-L-Ala-gamma-D-Glu-L-Lys-D-Ala-D-Ala)](n)-di-trans,octa-cis-undecaprenyl diphosphate + beta-D-GlcNAc-(1-&gt;4)-Mur2Ac(oyl-L-Ala-gamma-D-Glu-L-Lys-D-Ala-D-Ala)-di-trans,octa-cis-undecaprenyl diphosphate = [GlcNAc-(1-&gt;4)-Mur2Ac(oyl-L-Ala-gamma-D-Glu-L-Lys-D-Ala-D-Ala)](n+1)-di-trans,octa-cis-undecaprenyl diphosphate + di-trans,octa-cis-undecaprenyl diphosphate + H(+). The protein operates within cell wall biogenesis; peptidoglycan biosynthesis. In terms of biological role, peptidoglycan polymerase that is essential for cell division. The protein is Probable peptidoglycan glycosyltransferase FtsW of Halorhodospira halophila (strain DSM 244 / SL1) (Ectothiorhodospira halophila (strain DSM 244 / SL1)).